A 205-amino-acid polypeptide reads, in one-letter code: Coenzyme Q-binding protein COQ10, mitochondrial (205 aa).

This sequence belongs to the COQ10 family. Interacts with coenzyme Q.

It localises to the mitochondrion inner membrane. In terms of biological role, required for the function of coenzyme Q in the respiratory chain. May serve as a chaperone or may be involved in the transport of Q6 from its site of synthesis to the catalytic sites of the respiratory complexes. In Dictyostelium discoideum (Social amoeba), this protein is Coenzyme Q-binding protein COQ10, mitochondrial (coq10-1).